The following is a 739-amino-acid chain: Homeobox protein SIX5 (739 aa).

Low complexity-rich tracts occupy residues 1–24 (MATLPAEPSAGPAAGGEAVAAAAA), 34–61 (QLLQTLQAAEGEAAAAAGAGAGAAAAGA), and 74–83 (PEAASEPPTG). 4 disordered regions span residues 1-84 (MATL…PTGL), 251-294 (NRRQ…AAPV), 361-381 (LTGGGGAPPPQPSPQGASETK), and 617-650 (LSAQQPPPAAATTSSTSLPFSPDSPGLLPNFPAP). The segment at residues 201 to 260 (GEETVYCFKERSRAALKACYRGNRYPTPDEKRRLATLTGLSLTQVSNWFKNRRQRDRTGA) is a DNA-binding region (homeobox). The segment covering 279-289 (ESSRSPEDLER) has biased composition (basic and acidic residues). Low complexity predominate over residues 617–646 (LSAQQPPPAAATTSSTSLPFSPDSPGLLPN).

It belongs to the SIX/Sine oculis homeobox family. As to quaternary structure, probably binds DNA dimer. Interacts with EYA3, and probably EYA1 and EYA2. As to expression, expressed in adult but not in fetal eyes. Found in corneal epithelium and endothelium, lens epithelium, ciliary body epithelia, cellular layers of the retina and the sclera.

Its subcellular location is the cytoplasm. The protein localises to the nucleus. Functionally, transcription factor that is thought to be involved in regulation of organogenesis. May be involved in determination and maintenance of retina formation. Binds a 5'-GGTGTCAG-3' motif present in the ARE regulatory element of ATP1A1. Binds a 5'-TCA[AG][AG]TTNC-3' motif present in the MEF3 element in the myogenin promoter, and in the IGFBP5 promoter. Thought to be regulated by association with Dach and Eya proteins, and seems to be coactivated by EYA1, EYA2 and EYA3. The sequence is that of Homeobox protein SIX5 (SIX5) from Homo sapiens (Human).